Here is a 338-residue protein sequence, read N- to C-terminus: tRNA pseudouridine synthase D (338 aa).

D79 (nucleophile) is an active-site residue. Positions G154–Y303 constitute a TRUD domain.

It belongs to the pseudouridine synthase TruD family.

The enzyme catalyses uridine(13) in tRNA = pseudouridine(13) in tRNA. Functionally, responsible for synthesis of pseudouridine from uracil-13 in transfer RNAs. This chain is tRNA pseudouridine synthase D, found in Legionella pneumophila (strain Lens).